We begin with the raw amino-acid sequence, 343 residues long: Putative MO25-like protein At4g17270 (343 aa).

The protein belongs to the Mo25 family.

This Arabidopsis thaliana (Mouse-ear cress) protein is Putative MO25-like protein At4g17270.